We begin with the raw amino-acid sequence, 559 residues long: T-complex protein 1 subunit gamma (559 aa).

A disulfide bridge connects residues C368 and C374. A disordered region spans residues 531-559; that stretch reads KDKRGGAGQRGGDRGQGDQEETFGDQRDG.

The protein belongs to the TCP-1 chaperonin family. In terms of assembly, heterooligomeric complex of about 850 to 900 kDa that forms two stacked rings, 12 to 16 nm in diameter.

It localises to the cytoplasm. Its function is as follows. Molecular chaperone; assists the folding of proteins upon ATP hydrolysis. Known to play a role, in vitro, in the folding of actin and tubulin. This Oxytricha granulifera (Ciliate) protein is T-complex protein 1 subunit gamma.